The sequence spans 474 residues: Protein nucleotidyltransferase YdiU (474 aa).

Residues Gly-89, Gly-91, Arg-92, Lys-112, Asp-124, Gly-125, Arg-175, and Arg-182 each coordinate ATP. Asp-256 serves as the catalytic Proton acceptor. Asn-257 and Asp-266 together coordinate Mg(2+). Asp-266 is an ATP binding site.

The protein belongs to the SELO family. The cofactor is Mg(2+). Mn(2+) serves as cofactor.

It catalyses the reaction L-seryl-[protein] + ATP = 3-O-(5'-adenylyl)-L-seryl-[protein] + diphosphate. The catalysed reaction is L-threonyl-[protein] + ATP = 3-O-(5'-adenylyl)-L-threonyl-[protein] + diphosphate. The enzyme catalyses L-tyrosyl-[protein] + ATP = O-(5'-adenylyl)-L-tyrosyl-[protein] + diphosphate. It carries out the reaction L-histidyl-[protein] + UTP = N(tele)-(5'-uridylyl)-L-histidyl-[protein] + diphosphate. It catalyses the reaction L-seryl-[protein] + UTP = O-(5'-uridylyl)-L-seryl-[protein] + diphosphate. The catalysed reaction is L-tyrosyl-[protein] + UTP = O-(5'-uridylyl)-L-tyrosyl-[protein] + diphosphate. Nucleotidyltransferase involved in the post-translational modification of proteins. It can catalyze the addition of adenosine monophosphate (AMP) or uridine monophosphate (UMP) to a protein, resulting in modifications known as AMPylation and UMPylation. The protein is Protein nucleotidyltransferase YdiU of Corynebacterium glutamicum (strain ATCC 13032 / DSM 20300 / JCM 1318 / BCRC 11384 / CCUG 27702 / LMG 3730 / NBRC 12168 / NCIMB 10025 / NRRL B-2784 / 534).